Consider the following 264-residue polypeptide: Merozoite surface protein 2 (264 aa).

The N-terminal stretch at 1 to 20 (MKVIKTLSIINFFIFVTFNI) is a signal peptide. N-linked (GlcNAc...) asparagine glycosylation is found at Asn22 and Asn36. The polymorphic region stretch occupies residues 44–190 (ANEGSNTNSV…PQTAENENPA (147 aa)). Positions 46-227 (EGSNTNSVGA…QKECTDGNKE (182 aa)) are disordered. Tandem repeats lie at residues 60-91 (ADTI…TPTA) and 92-123 (ADTI…TPTA). The tract at residues 60-123 (ADTIASGSQR…GESQTTTPTA (64 aa)) is 2 X 32 AA perfects repeats. Low complexity predominate over residues 70-81 (STNSASTSTTNN). The segment covering 82–101 (GESQTTTPTAADTIASGSQR) has biased composition (polar residues). Over residues 102-145 (STNSASTSTTNNGESQTTTPTAADTPTATESISPSPPITTTESS) the composition is skewed to low complexity. Over residues 154-166 (TDGKGEESEKQNE) the composition is skewed to basic and acidic residues. N-linked (GlcNAc...) asparagine glycosylation occurs at Asn213. A compositionally biased stretch (basic and acidic residues) spans 217-226 (SQKECTDGNK). The cysteines at positions 221 and 229 are disulfide-linked. A glycan (N-linked (GlcNAc...) asparagine) is linked at Asn238. The GPI-anchor amidated asparagine moiety is linked to residue Asn238. Residues 239–264 (SSNIASINKFVVLISATLVLSFAIFI) constitute a propeptide, removed in mature form.

Its subcellular location is the cell membrane. Functionally, may play a role in the merozoite attachment to the erythrocyte. The protein is Merozoite surface protein 2 of Plasmodium falciparum (isolate FC27 / Papua New Guinea).